Consider the following 394-residue polypeptide: Succinate--CoA ligase [ADP-forming] subunit beta (394 aa).

ATP is bound by residues Lys-46, Gly-53–Gly-55, Glu-99, Cys-102, and Glu-107. Mg(2+) contacts are provided by Asn-199 and Asp-213. Residues Asn-264 and Gly-321–Val-323 contribute to the substrate site.

It belongs to the succinate/malate CoA ligase beta subunit family. In terms of assembly, heterotetramer of two alpha and two beta subunits. Mg(2+) serves as cofactor.

It carries out the reaction succinate + ATP + CoA = succinyl-CoA + ADP + phosphate. The enzyme catalyses GTP + succinate + CoA = succinyl-CoA + GDP + phosphate. It functions in the pathway carbohydrate metabolism; tricarboxylic acid cycle; succinate from succinyl-CoA (ligase route): step 1/1. In terms of biological role, succinyl-CoA synthetase functions in the citric acid cycle (TCA), coupling the hydrolysis of succinyl-CoA to the synthesis of either ATP or GTP and thus represents the only step of substrate-level phosphorylation in the TCA. The beta subunit provides nucleotide specificity of the enzyme and binds the substrate succinate, while the binding sites for coenzyme A and phosphate are found in the alpha subunit. This Haemophilus influenzae (strain PittGG) protein is Succinate--CoA ligase [ADP-forming] subunit beta.